A 364-amino-acid chain; its full sequence is Serpentine receptor class epsilon-27 (364 aa).

7 consecutive transmembrane segments (helical) span residues 31–51 (VIASIELILYSICLYIVVVSL), 64–84 (FIILVAPFFGIWFELIIGKLI), 125–145 (LLIIAGFMEYHYMFSVVFGAV), 167–187 (IFIPIALTVFFQIIAITCSCL), 195–215 (IITINGTWIVSCACSSIVFFL), 257–277 (LIFSELGTISIIGLIIATLLL), and 290–310 (NALFLNPFGICTVAMYSIPAW).

Belongs to the nematode receptor-like protein sre family.

It localises to the membrane. The protein is Serpentine receptor class epsilon-27 (sre-27) of Caenorhabditis elegans.